Reading from the N-terminus, the 158-residue chain is Transcription elongation factor GreA (158 aa).

Residues 53 to 73 (EQQSFIEGRIQEIEGKLSNAQ) adopt a coiled-coil conformation.

The protein belongs to the GreA/GreB family.

Necessary for efficient RNA polymerase transcription elongation past template-encoded arresting sites. The arresting sites in DNA have the property of trapping a certain fraction of elongating RNA polymerases that pass through, resulting in locked ternary complexes. Cleavage of the nascent transcript by cleavage factors such as GreA or GreB allows the resumption of elongation from the new 3'terminus. GreA releases sequences of 2 to 3 nucleotides. This chain is Transcription elongation factor GreA, found in Halorhodospira halophila (strain DSM 244 / SL1) (Ectothiorhodospira halophila (strain DSM 244 / SL1)).